The chain runs to 445 residues: Chromosome partition protein MukF (445 aa).

Residues 213–241 (LSETSATLKELQDTLQAAGDELQTQILDI) are leucine-zipper.

Belongs to the MukF family. As to quaternary structure, interacts, and probably forms a ternary complex, with MukE and MukB via its C-terminal region. The complex formation is stimulated by calcium or magnesium. It is required for an interaction between MukE and MukB.

Its subcellular location is the cytoplasm. It localises to the nucleoid. In terms of biological role, involved in chromosome condensation, segregation and cell cycle progression. May participate in facilitating chromosome segregation by condensation DNA from both sides of a centrally located replisome during cell division. Not required for mini-F plasmid partitioning. Probably acts via its interaction with MukB and MukE. Overexpression results in anucleate cells. It has a calcium binding activity. The polypeptide is Chromosome partition protein MukF (Vibrio atlanticus (strain LGP32) (Vibrio splendidus (strain Mel32))).